Consider the following 321-residue polypeptide: Lipoyl synthase (321 aa).

7 residues coordinate [4Fe-4S] cluster: Cys-68, Cys-73, Cys-79, Cys-94, Cys-98, Cys-101, and Ser-308. Residues 80-297 (FNHGTATFMI…KEVALELGFT (218 aa)) enclose the Radical SAM core domain.

Belongs to the radical SAM superfamily. Lipoyl synthase family. It depends on [4Fe-4S] cluster as a cofactor.

The protein localises to the cytoplasm. The catalysed reaction is [[Fe-S] cluster scaffold protein carrying a second [4Fe-4S](2+) cluster] + N(6)-octanoyl-L-lysyl-[protein] + 2 oxidized [2Fe-2S]-[ferredoxin] + 2 S-adenosyl-L-methionine + 4 H(+) = [[Fe-S] cluster scaffold protein] + N(6)-[(R)-dihydrolipoyl]-L-lysyl-[protein] + 4 Fe(3+) + 2 hydrogen sulfide + 2 5'-deoxyadenosine + 2 L-methionine + 2 reduced [2Fe-2S]-[ferredoxin]. The protein operates within protein modification; protein lipoylation via endogenous pathway; protein N(6)-(lipoyl)lysine from octanoyl-[acyl-carrier-protein]: step 2/2. Its function is as follows. Catalyzes the radical-mediated insertion of two sulfur atoms into the C-6 and C-8 positions of the octanoyl moiety bound to the lipoyl domains of lipoate-dependent enzymes, thereby converting the octanoylated domains into lipoylated derivatives. In Vibrio cholerae serotype O1 (strain ATCC 39315 / El Tor Inaba N16961), this protein is Lipoyl synthase.